Reading from the N-terminus, the 76-residue chain is Sulfur carrier protein TusA (76 aa).

The active-site Cysteine persulfide intermediate is the C14.

The protein belongs to the sulfur carrier protein TusA family. In terms of assembly, interacts with IscS.

Its subcellular location is the cytoplasm. It functions in the pathway tRNA modification. Sulfur carrier protein involved in sulfur trafficking in the cell. Part of a sulfur-relay system required for 2-thiolation during synthesis of 2-thiouridine of the modified wobble base 5-methylaminomethyl-2-thiouridine (mnm(5)s(2)U) in tRNA. Interacts with IscS and stimulates its cysteine desulfurase activity. Accepts an activated sulfur from IscS, which is then transferred to TusD, and thus determines the direction of sulfur flow from IscS to 2-thiouridine formation. Also appears to be involved in sulfur transfer for the biosynthesis of molybdopterin. The protein is Sulfur carrier protein TusA of Buchnera aphidicola subsp. Acyrthosiphon pisum (strain Tuc7).